The following is a 141-amino-acid chain: Alpha-lactalbumin (141 aa).

Residues 1-19 (MMSFVSLLVVGILFPAIQA) form the signal peptide. Residues 20–141 (KQFTKCELSQ…KLDQWLCEKM (122 aa)) enclose the C-type lysozyme domain. Intrachain disulfides connect Cys25–Cys138, Cys47–Cys129, Cys80–Cys95, and Cys91–Cys109. Residues Lys97, Asp100, Asp102, Asp105, and Asp106 each contribute to the Ca(2+) site.

Belongs to the glycosyl hydrolase 22 family. Lactose synthase (LS) is a heterodimer of a catalytic component, beta1,4-galactosyltransferase (beta4Gal-T1) and a regulatory component, alpha-lactalbumin (LA). Mammary gland specific. Secreted in milk.

It is found in the secreted. Regulatory subunit of lactose synthase, changes the substrate specificity of galactosyltransferase in the mammary gland making glucose a good acceptor substrate for this enzyme. This enables LS to synthesize lactose, the major carbohydrate component of milk. In other tissues, galactosyltransferase transfers galactose onto the N-acetylglucosamine of the oligosaccharide chains in glycoproteins. This is Alpha-lactalbumin (LALBA) from Sus scrofa (Pig).